The following is a 274-amino-acid chain: NH(3)-dependent NAD(+) synthetase (274 aa).

Position 46–53 (46–53 (GISGGQDS)) interacts with ATP. Residue Asp52 participates in Mg(2+) binding. Residue Arg140 participates in deamido-NAD(+) binding. ATP is bound at residue Thr160. Glu165 contributes to the Mg(2+) binding site. Positions 173 and 180 each coordinate deamido-NAD(+). ATP contacts are provided by Lys189 and Thr211. 260-261 (HK) provides a ligand contact to deamido-NAD(+).

The protein belongs to the NAD synthetase family. Homodimer.

It catalyses the reaction deamido-NAD(+) + NH4(+) + ATP = AMP + diphosphate + NAD(+) + H(+). It functions in the pathway cofactor biosynthesis; NAD(+) biosynthesis; NAD(+) from deamido-NAD(+) (ammonia route): step 1/1. In terms of biological role, catalyzes the ATP-dependent amidation of deamido-NAD to form NAD. Uses ammonia as a nitrogen source. The chain is NH(3)-dependent NAD(+) synthetase from Rhodococcus erythropolis (strain PR4 / NBRC 100887).